A 602-amino-acid polypeptide reads, in one-letter code: Zinc finger MYND domain-containing protein 11 (602 aa).

The 77-residue stretch at 6-82 folds into the SAMD1-like winged helix (WH) domain; that stretch reads KRRQADTKAI…CKGSKAGIEQ (77 aa). The PHD-type zinc-finger motif lies at 100-148; it reads DWYCFECHLPGEVLICDLCFRVYHSKCLSDEFRLRDSSSPWQCPVCRSI. One can recognise a Bromo domain in the interval 149–255; the sequence is KKKNTNKQEM…KDTCHELDEL (107 aa). Positions 258, 261, 277, and 281 each coordinate Zn(2+). The region spanning 280-331 is the PWWP domain; sequence NHELVWAKMKGFGFWPAKVMQKEDNQVDVRFFGHHHQRAWIPSENIQDITVN. K366 is covalently cross-linked (Glycyl lysine isopeptide (Lys-Gly) (interchain with G-Cter in SUMO2)). Residues 366–459 are disordered; sequence KNEDRGEEEA…MLHRSTQTTN (94 aa). The Nuclear localization signal motif lies at 394–400; sequence RAKKGRR. Residues K407 and K408 each participate in a glycyl lysine isopeptide (Lys-Gly) (interchain with G-Cter in SUMO2) cross-link. Phosphoserine is present on S421. Residues 435-459 are compositionally biased toward polar residues; sequence SVSTQTKKLSASSPRMLHRSTQTTN. Residues 452–572 are interaction with human adenovirus E1A; sequence HRSTQTTNDG…CYNCEEEAMY (121 aa). 8 residues coordinate Zn(2+): C563, C566, C574, C575, C581, C585, H594, and C598. Residues 563–598 form an MYND-type zinc finger; sequence CYNCEEEAMYHCCWNTSYCSIKCQQEHWHAEHKRTC.

In terms of assembly, homooligomer; forms homooligomers via its C-terminus. Interacts with histone H3.3 trimethylated at 'Lys-36' (H3.3K36me3). Interacts (via MYND-type zinc finger) with NCOR1. Interacts (via MYND-type zinc finger) with MGA protein (via PXLXP motif). Interacts (via MYND-type zinc finger) with EZH2. Interacts with EMSY and E2F6. Interacts with PIAS1 and UBE2I. (Microbial infection) Interacts (via MYND-type zinc finger) with human adenovirus early E1A protein (via PXLXP motif); this interaction inhibits E1A mediated transactivation. As to quaternary structure, (Microbial infection) Interacts (via MYND-type zinc finger) with Epstein-Barr virus EBNA2 protein (via PXLXP motif). Interacts with Epstein-Barr virus-derived protein LMP1; leading to negatively regulate NF-kappa-B activation by Epstein-Barr virus-derived protein LMP1. In terms of processing, sumoylated following its interaction with PIAS1 and UBE2I. Ubiquitinated, leading to proteasomal degradation. Ubiquitous.

It localises to the nucleus. The protein resides in the chromosome. Functionally, chromatin reader that specifically recognizes and binds histone H3.3 trimethylated at 'Lys-36' (H3.3K36me3) and regulates RNA polymerase II elongation. Does not bind other histone H3 subtypes (H3.1 or H3.2). Colocalizes with highly expressed genes and functions as a transcription corepressor by modulating RNA polymerase II at the elongation stage. Binds non-specifically to dsDNA. Acts as a tumor-suppressor by repressing a transcriptional program essential for tumor cell growth. (Microbial infection) Inhibits Epstein-Barr virus EBNA2-mediated transcriptional activation and host cell proliferation, through direct interaction. In Homo sapiens (Human), this protein is Zinc finger MYND domain-containing protein 11.